Reading from the N-terminus, the 454-residue chain is uncharacterized protein (454 aa).

Positions 1 to 18 (MRRFTLFVFFLSISIAYA) are cleaved as a signal peptide.

This is an uncharacterized protein from Caenorhabditis elegans.